The chain runs to 935 residues: Lon protease homolog 2, peroxisomal (935 aa).

The Lon N-terminal domain maps to 12-296 (LPVHRLERNL…NLRRLVEEMG (285 aa)). Residue 452 to 459 (GPPGVGKT) coordinates ATP. The region spanning 692–922 (QKGYGVVNGL…SDVLASVWEG (231 aa)) is the Lon proteolytic domain. Catalysis depends on residues serine 789 and lysine 832. Positions 933 to 935 (ARI) match the Microbody targeting signal motif.

It belongs to the peptidase S16 family.

It is found in the peroxisome matrix. The catalysed reaction is Hydrolysis of proteins in presence of ATP.. In terms of biological role, ATP-dependent serine protease that mediates the selective degradation of misfolded and unassembled polypeptides in the peroxisomal matrix. Necessary for type 2 peroxisome targeting signal (PTS2)-containing protein processing and facilitates peroxisome matrix protein import. The protein is Lon protease homolog 2, peroxisomal (PLN) of Pichia angusta (Yeast).